The primary structure comprises 196 residues: Large ribosomal subunit protein uL6 (196 aa).

It belongs to the universal ribosomal protein uL6 family. In terms of assembly, part of the 50S ribosomal subunit.

In terms of biological role, this protein binds to the 23S rRNA, and is important in its secondary structure. It is located near the subunit interface in the base of the L7/L12 stalk, and near the tRNA binding site of the peptidyltransferase center. This chain is Large ribosomal subunit protein uL6, found in Archaeoglobus fulgidus (strain ATCC 49558 / DSM 4304 / JCM 9628 / NBRC 100126 / VC-16).